The following is a 375-amino-acid chain: GDP-mannose transporter GONST2 (375 aa).

The next 9 membrane-spanning stretches (helical) occupy residues Leu79–Val99, Met112–Val132, Leu141–Tyr161, Tyr165–Gly185, Trp199–Phe219, Met262–Gly282, Val300–Leu320, Thr327–Phe347, and Val349–Phe369.

Belongs to the nucleotide-sugar transporter family. GDP-Mannose:GMP antiporter (GMA) (TC 2.A.7.13) subfamily. In terms of tissue distribution, expressed in rosette leaves, stems, flowers and siliques.

Its subcellular location is the golgi apparatus membrane. GDP-mannose transporter that may be involved in the import of GDP-mannose from the cytoplasm into the Golgi lumen. The chain is GDP-mannose transporter GONST2 from Arabidopsis thaliana (Mouse-ear cress).